The following is a 175-amino-acid chain: Ribulose bisphosphate carboxylase small subunit, chloroplastic (175 aa).

Residues 1-46 (MAPTVMASSATSVAPFQGLKSTAGLPVSRRSNGASLGSVSNGGRIR) constitute a chloroplast transit peptide.

This sequence belongs to the RuBisCO small chain family. As to quaternary structure, heterohexadecamer of 8 large and 8 small subunits.

It localises to the plastid. The protein localises to the chloroplast. Its function is as follows. RuBisCO catalyzes two reactions: the carboxylation of D-ribulose 1,5-bisphosphate, the primary event in carbon dioxide fixation, as well as the oxidative fragmentation of the pentose substrate. Both reactions occur simultaneously and in competition at the same active site. Although the small subunit is not catalytic it is essential for maximal activity. The sequence is that of Ribulose bisphosphate carboxylase small subunit, chloroplastic from Aegilops tauschii (Tausch's goatgrass).